We begin with the raw amino-acid sequence, 463 residues long: Stress-activated protein kinase jnk-1 (463 aa).

Polar residues predominate over residues 1–12 (MEERLSTTSSYP). The tract at residues 1 to 23 (MEERLSTTSSYPSHPGRSVEEDH) is disordered. The Protein kinase domain occupies 119 to 412 (YQNLRLIGSG…ISVDDALRHP (294 aa)). ATP-binding positions include 126–131 (GSGAQG) and lysine 148. Aspartate 244 acts as the Proton acceptor in catalysis. Threonine 276 bears the Phosphothreonine mark. The short motif at 276 to 278 (TPY) is the TXY element. Phosphotyrosine is present on tyrosine 278.

It belongs to the protein kinase superfamily. CMGC Ser/Thr protein kinase family. MAP kinase subfamily. Binds to the scaffolding protein, unc-16. Unc-16 also binds other components of the JNK signaling pathway. Interacts with daf-16. Mg(2+) serves as cofactor. Post-translationally, dually phosphorylated on Thr-276 and Tyr-278, which activates the enzyme. Expressed in most neurons, including nerve ring, head ganglions, dorsal and ventral nerve cords and tail ganglions. The Thr-276/Tyr-278 phosphorylated form is present in the nerve ring upon heat exposure.

It is found in the cytoplasm. The protein resides in the perikaryon. The protein localises to the cell projection. It localises to the axon. It carries out the reaction L-seryl-[protein] + ATP = O-phospho-L-seryl-[protein] + ADP + H(+). The enzyme catalyses L-threonyl-[protein] + ATP = O-phospho-L-threonyl-[protein] + ADP + H(+). Its activity is regulated as follows. Activated by threonine and tyrosine phosphorylation by either of the dual specificity kinases, jkk-1 and mek-1. Functionally, serine/threonine-protein kinase which responds to activation by environmental stress by phosphorylating a number of transcription factors such as daf-16, and thus regulates transcriptional activity. By phosphorylating daf-16, plays a role in daf-16 nuclear translocation in intestinal cells in response to environmental stresses such as heat and oxidative stresses. Downstream of jkk-1, may coordinate locomotion via type-D GABAergic motoneurons and regulates synaptic vesicle transport in conjunction with unc-16. Independently of jkk-1, may regulate some mechanosensory responses, such as response to touch. Independently of jkk-1 and downstream of mek-1, plays a role in resistance to heavy metals, such as Cu(2+) or Cd(2+). Regulates germline cell apoptosis in response to heavy metals such as Cu(2+) and arsenite. Required for dopaminergic CEP neuron degeneration in response to Mn(2+). Required for normal sleep bout quantity and arousal thresholds during the transition from the last larval stage to adulthood in well-fed animals. Downstream of jkk-1 but independently of mek-1, positively regulates lifespan. This Caenorhabditis elegans protein is Stress-activated protein kinase jnk-1 (jnk-1).